The primary structure comprises 982 residues: ATP-dependent DNA helicase Q5 (982 aa).

The region spanning 39–213 (MAVVKGAEDV…FAALHLKQPV (175 aa)) is the Helicase ATP-binding domain. Residue 52–59 (MPTGAGKS) coordinates ATP. The DEAH box motif lies at 157–160 (DEAH). Residues 241-398 (NLRDFCLKAL…NKPSDKATLL (158 aa)) form the Helicase C-terminal domain. Residues Cys412, Cys428, Cys432, and Cys435 each contribute to the Zn(2+) site. 2 positions are modified to phosphoserine: Ser489 and Ser492. An interaction with POLR2A region spans residues 491–621 (GSGDEGRDEA…ASKDGQLYDM (131 aa)). Thr527 is subject to Phosphothreonine. The segment at 653-726 (PKRVGAGFSK…ALGSSVNCGD (74 aa)) is interaction with RAD51. Disordered regions lie at residues 675–797 (GKSH…PGKC) and 812–893 (QTEG…AQEP). Phosphoserine; by CDK1 is present on Ser728.

It belongs to the helicase family. RecQ subfamily. In terms of assembly, monomer. Interacts with TOP2A, TOP3A and TOP3B. Interacts with RNA polymerase II subunit POLR2A. Identified in a complex with the RNA polymerase II core bound to DNA. Interacts with RAD51. Interacts with WRN; this interaction stimulates WRN helicase activity on DNA fork duplexes. Interacts with MUS1; this interaction promotes MUS81-dependent mitotic DNA synthesis. Zn(2+) serves as cofactor. Post-translationally, phosphorylated by CDK1 at Ser-728; this phosphorylation is required for RECQL5-mediated disruption of RAD51 filaments on stalled replication forks.

The protein resides in the nucleus. Its subcellular location is the nucleoplasm. The enzyme catalyses Couples ATP hydrolysis with the unwinding of duplex DNA by translocating in the 3'-5' direction.. It catalyses the reaction ATP + H2O = ADP + phosphate + H(+). Functionally, DNA helicase that plays an important role in DNA replication, transcription and repair. Binds to the RNA polymerase II subunit POLR2A during transcription elongation and suppresses transcription-associated genomic instability. Also associates with POLR1A and enforces the stability of ribosomal DNA arrays. Plays an important role in mitotic chromosome separation after cross-over events and cell cycle progress. Mechanistically, removes RAD51 filaments protecting stalled replication forks at common fragile sites and stimulates MUS81-EME1 endonuclease leading to mitotic DNA synthesis. Required for efficient DNA repair, including repair of inter-strand cross-links. Stimulates DNA decatenation mediated by TOP2A. Prevents sister chromatid exchange and homologous recombination. This is ATP-dependent DNA helicase Q5 (Recql5) from Mus musculus (Mouse).